Consider the following 189-residue polypeptide: Probable nicotinate-nucleotide adenylyltransferase (189 aa).

Belongs to the NadD family.

The catalysed reaction is nicotinate beta-D-ribonucleotide + ATP + H(+) = deamido-NAD(+) + diphosphate. Its pathway is cofactor biosynthesis; NAD(+) biosynthesis; deamido-NAD(+) from nicotinate D-ribonucleotide: step 1/1. Functionally, catalyzes the reversible adenylation of nicotinate mononucleotide (NaMN) to nicotinic acid adenine dinucleotide (NaAD). The polypeptide is Probable nicotinate-nucleotide adenylyltransferase (Bacillus cereus (strain AH187)).